Consider the following 43-residue polypeptide: Potassium channel toxin gamma-KTx 4.3 (43 aa).

Disulfide bonds link Cys-5–Cys-23, Cys-11–Cys-34, Cys-20–Cys-39, and Cys-24–Cys-41.

The protein belongs to the ergtoxin family. Gamma-KTx 4 subfamily. Expressed by the venom gland.

It localises to the secreted. Reversibly blocks Kv11/ERG potassium channels. This Centruroides exilicauda (Bark scorpion) protein is Potassium channel toxin gamma-KTx 4.3.